Here is a 472-residue protein sequence, read N- to C-terminus: ATP synthase subunit beta (472 aa).

ATP is bound at residue 160–167 (GGAGVGKT).

It belongs to the ATPase alpha/beta chains family. As to quaternary structure, F-type ATPases have 2 components, CF(1) - the catalytic core - and CF(0) - the membrane proton channel. CF(1) has five subunits: alpha(3), beta(3), gamma(1), delta(1), epsilon(1). CF(0) has three main subunits: a(1), b(2) and c(9-12). The alpha and beta chains form an alternating ring which encloses part of the gamma chain. CF(1) is attached to CF(0) by a central stalk formed by the gamma and epsilon chains, while a peripheral stalk is formed by the delta and b chains.

Its subcellular location is the cell membrane. The enzyme catalyses ATP + H2O + 4 H(+)(in) = ADP + phosphate + 5 H(+)(out). Functionally, produces ATP from ADP in the presence of a proton gradient across the membrane. The catalytic sites are hosted primarily by the beta subunits. This Lachnoclostridium phytofermentans (strain ATCC 700394 / DSM 18823 / ISDg) (Clostridium phytofermentans) protein is ATP synthase subunit beta.